Here is a 225-residue protein sequence, read N- to C-terminus: Cytidylate kinase (225 aa).

11-19 (GPAAAGKST) is an ATP binding site.

The protein belongs to the cytidylate kinase family. Type 1 subfamily.

It is found in the cytoplasm. It carries out the reaction CMP + ATP = CDP + ADP. The catalysed reaction is dCMP + ATP = dCDP + ADP. This chain is Cytidylate kinase, found in Bacillus cereus (strain G9842).